The primary structure comprises 685 residues: Glycine--tRNA ligase beta subunit (685 aa).

Belongs to the class-II aminoacyl-tRNA synthetase family. As to quaternary structure, tetramer of two alpha and two beta subunits.

It localises to the cytoplasm. It carries out the reaction tRNA(Gly) + glycine + ATP = glycyl-tRNA(Gly) + AMP + diphosphate. In Leuconostoc mesenteroides subsp. mesenteroides (strain ATCC 8293 / DSM 20343 / BCRC 11652 / CCM 1803 / JCM 6124 / NCDO 523 / NBRC 100496 / NCIMB 8023 / NCTC 12954 / NRRL B-1118 / 37Y), this protein is Glycine--tRNA ligase beta subunit.